Consider the following 250-residue polypeptide: Triosephosphate isomerase (250 aa).

9–11 (NWK) provides a ligand contact to substrate. The active-site Electrophile is His96. Glu166 functions as the Proton acceptor in the catalytic mechanism. Substrate is bound by residues Gly172, Ser212, and 233–234 (GG).

Belongs to the triosephosphate isomerase family. In terms of assembly, homodimer.

Its subcellular location is the cytoplasm. The catalysed reaction is D-glyceraldehyde 3-phosphate = dihydroxyacetone phosphate. Its pathway is carbohydrate biosynthesis; gluconeogenesis. It participates in carbohydrate degradation; glycolysis; D-glyceraldehyde 3-phosphate from glycerone phosphate: step 1/1. Functionally, involved in the gluconeogenesis. Catalyzes stereospecifically the conversion of dihydroxyacetone phosphate (DHAP) to D-glyceraldehyde-3-phosphate (G3P). This chain is Triosephosphate isomerase, found in Chlorobium luteolum (strain DSM 273 / BCRC 81028 / 2530) (Pelodictyon luteolum).